A 415-amino-acid polypeptide reads, in one-letter code: Dynein assembly factor with WD repeat domains 1 (415 aa).

8 WD repeats span residues 90-129 (AHIL…ELHT), 132-174 (GHKN…HTFR), 175-214 (GHTA…EVVT), 217-256 (GHLA…KVHT), 259-298 (GHCA…YVAT), 301-340 (GHDD…CVTK), 343-384 (GHEG…QVLE), and 386-415 (HTDE…RIWR).

It belongs to the WD repeat WDR69 family. Interacts with IFT46. In early mouse embryos, expression is limited to distal, motile ciliated cells of the node.

It localises to the cytoplasm. It is found in the cytoskeleton. The protein resides in the flagellum basal body. Its subcellular location is the flagellum axoneme. In terms of biological role, required for axonemal dynein assembly and ciliary motility in ciliated organs, including Kupffer's vesicle, during embryogenesis. Facilitates the onset of robust cilia motility during development. This is Dynein assembly factor with WD repeat domains 1 from Mus musculus (Mouse).